The sequence spans 214 residues: Adenylate kinase (214 aa).

10-15 (GVGKGT) is an ATP binding site. Residues 30 to 59 (STGDILRAAVKELTPMGAKAKGYMDSGALV) are NMP. AMP-binding positions include Thr31, Arg36, 57-59 (ALV), 85-88 (GFPR), and Gln92. The interval 126 to 163 (GRRACANCGAGYHVDFAPSKVAGVCDACSGQLVQREDD) is LID. An ATP-binding site is contributed by Arg127. Zn(2+)-binding residues include Cys130, Cys133, Cys150, and Cys153. Positions 160 and 171 each coordinate AMP. Gly199 is an ATP binding site.

Belongs to the adenylate kinase family. As to quaternary structure, monomer.

It localises to the cytoplasm. It catalyses the reaction AMP + ATP = 2 ADP. Its pathway is purine metabolism; AMP biosynthesis via salvage pathway; AMP from ADP: step 1/1. In terms of biological role, catalyzes the reversible transfer of the terminal phosphate group between ATP and AMP. Plays an important role in cellular energy homeostasis and in adenine nucleotide metabolism. This Geobacter sp. (strain M21) protein is Adenylate kinase.